Here is a 332-residue protein sequence, read N- to C-terminus: Thiamine thiazole synthase (332 aa).

Substrate-binding positions include C87, E108 to A109, G116, and V184. A 2,3-didehydroalanine (Cys) modification is found at C221. Residues D223, H238, M290, and R300–G302 each bind substrate.

The protein belongs to the THI4 family. As to quaternary structure, homooctamer. It depends on Fe cation as a cofactor. During the catalytic reaction, a sulfide is transferred from Cys-221 to a reaction intermediate, generating a dehydroalanine residue.

Its subcellular location is the cytoplasm. It is found in the nucleus. The enzyme catalyses [ADP-thiazole synthase]-L-cysteine + glycine + NAD(+) = [ADP-thiazole synthase]-dehydroalanine + ADP-5-ethyl-4-methylthiazole-2-carboxylate + nicotinamide + 3 H2O + 2 H(+). Its function is as follows. Involved in biosynthesis of the thiamine precursor thiazole. Catalyzes the conversion of NAD and glycine to adenosine diphosphate 5-(2-hydroxyethyl)-4-methylthiazole-2-carboxylic acid (ADT), an adenylated thiazole intermediate. The reaction includes an iron-dependent sulfide transfer from a conserved cysteine residue of the protein to a thiazole intermediate. The enzyme can only undergo a single turnover, which suggests it is a suicide enzyme. May have additional roles in adaptation to various stress conditions and in DNA damage tolerance. This Aspergillus fumigatus (strain ATCC MYA-4609 / CBS 101355 / FGSC A1100 / Af293) (Neosartorya fumigata) protein is Thiamine thiazole synthase.